The chain runs to 149 residues: SsrA-binding protein (149 aa).

Belongs to the SmpB family.

The protein localises to the cytoplasm. Its function is as follows. Required for rescue of stalled ribosomes mediated by trans-translation. Binds to transfer-messenger RNA (tmRNA), required for stable association of tmRNA with ribosomes. tmRNA and SmpB together mimic tRNA shape, replacing the anticodon stem-loop with SmpB. tmRNA is encoded by the ssrA gene; the 2 termini fold to resemble tRNA(Ala) and it encodes a 'tag peptide', a short internal open reading frame. During trans-translation Ala-aminoacylated tmRNA acts like a tRNA, entering the A-site of stalled ribosomes, displacing the stalled mRNA. The ribosome then switches to translate the ORF on the tmRNA; the nascent peptide is terminated with the 'tag peptide' encoded by the tmRNA and targeted for degradation. The ribosome is freed to recommence translation, which seems to be the essential function of trans-translation. This is SsrA-binding protein from Fervidobacterium nodosum (strain ATCC 35602 / DSM 5306 / Rt17-B1).